Here is a 383-residue protein sequence, read N- to C-terminus: Processive diacylglycerol beta-glucosyltransferase (383 aa).

Belongs to the glycosyltransferase 28 family. UgtP subfamily.

Its subcellular location is the cell membrane. It catalyses the reaction a 1,2-diacyl-3-O-(beta-D-glucopyranosyl)-sn-glycerol + UDP-alpha-D-glucose = a 1,2-diacyl-3-O-(beta-D-Glc-(1-&gt;6)-beta-D-Glc)-sn-glycerol + UDP + H(+). The enzyme catalyses a 1,2-diacyl-3-O-(beta-D-Glc-(1-&gt;6)-beta-D-Glc)-sn-glycerol + UDP-alpha-D-glucose = a 1,2-diacyl-3-O-(beta-D-Glc-(1-&gt;6)-beta-D-Glc-(1-&gt;6)-beta-D-Glc)-sn-glycerol + UDP + H(+). The catalysed reaction is a 1,2-diacyl-sn-glycerol + UDP-alpha-D-glucose = a 1,2-diacyl-3-O-(beta-D-glucopyranosyl)-sn-glycerol + UDP + H(+). It functions in the pathway glycolipid metabolism; diglucosyl-diacylglycerol biosynthesis. Functionally, processive glucosyltransferase involved in the biosynthesis of both the bilayer- and non-bilayer-forming membrane glucolipids. Is able to successively transfer up to three glucosyl residues to diacylglycerol (DAG), thereby catalyzing the formation of beta-monoglucosyl-DAG (3-O-(beta-D-glucopyranosyl)-1,2-diacyl-sn-glycerol), beta-diglucosyl-DAG (3-O-(beta-D-glucopyranosyl-beta-(1-&gt;6)-D-glucopyranosyl)-1,2-diacyl-sn-glycerol) and beta-triglucosyl-DAG (3-O-(beta-D-glucopyranosyl-beta-(1-&gt;6)-D-glucopyranosyl-beta-(1-&gt;6)-D-glucopyranosyl)-1,2-diacyl-sn-glycerol). Beta-diglucosyl-DAG is the predominant glycolipid found in Bacillales and is also used as a membrane anchor for lipoteichoic acid (LTA). The polypeptide is Processive diacylglycerol beta-glucosyltransferase (Bacillus licheniformis (strain ATCC 14580 / DSM 13 / JCM 2505 / CCUG 7422 / NBRC 12200 / NCIMB 9375 / NCTC 10341 / NRRL NRS-1264 / Gibson 46)).